A 65-amino-acid chain; its full sequence is Small, acid-soluble spore protein H 1 (65 aa).

It belongs to the SspH family.

The protein localises to the spore core. This Clostridium botulinum (strain Langeland / NCTC 10281 / Type F) protein is Small, acid-soluble spore protein H 1.